The primary structure comprises 63 residues: Small ribosomal subunit protein bS21 (63 aa).

This sequence belongs to the bacterial ribosomal protein bS21 family.

This chain is Small ribosomal subunit protein bS21, found in Porphyromonas gingivalis (strain ATCC 33277 / DSM 20709 / CIP 103683 / JCM 12257 / NCTC 11834 / 2561).